A 617-amino-acid chain; its full sequence is Probable Xaa-Pro aminopeptidase P (617 aa).

Residues Asp414, Asp425, Glu523, and Glu537 each coordinate Mn(2+).

Belongs to the peptidase M24B family. It depends on Mn(2+) as a cofactor.

It carries out the reaction Release of any N-terminal amino acid, including proline, that is linked to proline, even from a dipeptide or tripeptide.. In terms of biological role, catalyzes the removal of a penultimate prolyl residue from the N-termini of peptides. This Blastomyces gilchristii (strain SLH14081) (Blastomyces dermatitidis) protein is Probable Xaa-Pro aminopeptidase P (AMPP).